We begin with the raw amino-acid sequence, 283 residues long: Urease accessory protein UreD (283 aa).

Belongs to the UreD family. As to quaternary structure, ureD, UreF and UreG form a complex that acts as a GTP-hydrolysis-dependent molecular chaperone, activating the urease apoprotein by helping to assemble the nickel containing metallocenter of UreC. The UreE protein probably delivers the nickel.

Its subcellular location is the cytoplasm. In terms of biological role, required for maturation of urease via the functional incorporation of the urease nickel metallocenter. In Rhodopseudomonas palustris (strain BisB5), this protein is Urease accessory protein UreD.